The following is a 250-amino-acid chain: MSGHSKWSTIKRKKAATDQKRGNLFTKLVREITIAAKMGGGDPSGNPRLRLALDNARANSMPQENIQRAIKKGTGELDGVVYEEITYEGYGPGGIALIIETATDNRNRTVADIRHIINRSNGSLGENGSVSWMFHRKGCIDVLKSSAGEEELMEILLEAGLEDLNTDDEQFYNVIIDVKDLESAKKALDDKGIAYENARMDMIPDNYVELEAEDAVKAVKLIDALENSDDVQVVYSNIEFSEQAMNSLDS.

Belongs to the TACO1 family.

The protein localises to the cytoplasm. In Prosthecochloris aestuarii (strain DSM 271 / SK 413), this protein is Probable transcriptional regulatory protein Paes_0496.